The chain runs to 589 residues: Putative sphingomyelin phosphodiesterase asm-3 (589 aa).

The signal sequence occupies residues 1-17; that stretch reads MLLGLLVLSLAFQGTLA. The Saposin B-type domain maps to 18 to 101; the sequence is VTECEECKSI…LMKNDCGDFV (84 aa). Disulfide bonds link Cys-21-Cys-97, Cys-24-Cys-89, and Cys-52-Cys-63. Asn-109 is a glycosylation site (N-linked (GlcNAc...) asparagine). Zn(2+) is bound by residues Asp-139 and His-141. Cystine bridges form between Cys-154/Cys-159 and Cys-160/Cys-188. A Zn(2+)-binding site is contributed by Asp-217. Asn-237 carries an N-linked (GlcNAc...) asparagine glycan. Asn-257 is a binding site for Zn(2+). A glycan (N-linked (GlcNAc...) asparagine) is linked at Asn-334. 3 residues coordinate Zn(2+): His-364, His-398, and His-400. Asn-463 is a glycosylation site (N-linked (GlcNAc...) asparagine). Intrachain disulfides connect Cys-530-Cys-535 and Cys-541-Cys-553. A disordered region spans residues 562-589; the sequence is KPEPKKNKYSARFATSNERRRGKEECKI. A compositionally biased stretch (basic and acidic residues) spans 578–589; that stretch reads NERRRGKEECKI.

Belongs to the acid sphingomyelinase family. It depends on Zn(2+) as a cofactor.

It localises to the secreted. The enzyme catalyses an N-(acyl)-sphingosylphosphocholine + H2O = an N-acyl-sphingoid base + phosphocholine + H(+). The catalysed reaction is a sphingomyelin + H2O = phosphocholine + an N-acylsphing-4-enine + H(+). It carries out the reaction an N-acyl-15-methylhexadecasphing-4-enine-1-phosphocholine + H2O = an N-acyl-15-methylhexadecasphing-4-enine + phosphocholine + H(+). It participates in lipid metabolism; sphingolipid metabolism. Converts sphingomyelin to ceramide (N-acyl-sphingoid base) and phosphocholine. C.elegans contain specific sphingoid bases, which are unique or different in structure compared to the sphingoid bases found in other animals. Two examples of these distinctive compounds are: 15-methylhexadecasphinganine and 15-methylhexadecasphing-4-enine. This chain is Putative sphingomyelin phosphodiesterase asm-3 (asm-3), found in Caenorhabditis elegans.